Here is a 300-residue protein sequence, read N- to C-terminus: Bifunctional protein FolD (300 aa).

NADP(+) is bound by residues 169–171 (GRG), Ser196, and Ile237.

The protein belongs to the tetrahydrofolate dehydrogenase/cyclohydrolase family. In terms of assembly, homodimer.

The enzyme catalyses (6R)-5,10-methylene-5,6,7,8-tetrahydrofolate + NADP(+) = (6R)-5,10-methenyltetrahydrofolate + NADPH. It catalyses the reaction (6R)-5,10-methenyltetrahydrofolate + H2O = (6R)-10-formyltetrahydrofolate + H(+). It functions in the pathway one-carbon metabolism; tetrahydrofolate interconversion. In terms of biological role, catalyzes the oxidation of 5,10-methylenetetrahydrofolate to 5,10-methenyltetrahydrofolate and then the hydrolysis of 5,10-methenyltetrahydrofolate to 10-formyltetrahydrofolate. In Clavibacter michiganensis subsp. michiganensis (strain NCPPB 382), this protein is Bifunctional protein FolD.